The primary structure comprises 477 residues: Argininosuccinate lyase (477 aa).

This sequence belongs to the lyase 1 family. Argininosuccinate lyase subfamily.

The protein localises to the cytoplasm. The catalysed reaction is 2-(N(omega)-L-arginino)succinate = fumarate + L-arginine. It functions in the pathway amino-acid biosynthesis; L-arginine biosynthesis; L-arginine from L-ornithine and carbamoyl phosphate: step 3/3. The chain is Argininosuccinate lyase from Acinetobacter baumannii (strain ACICU).